The following is a 346-amino-acid chain: Low-temperature-induced cysteine proteinase (346 aa).

Positions 1-17 (KLSKNKSDRYLPKVGDS) are cleaved as a propeptide — activation peptide. Cystine bridges form between Cys-39–Cys-81, Cys-73–Cys-114, Cys-172–Cys-223, Cys-256–Cys-268, and Cys-262–Cys-283. Cys-42 is a catalytic residue. Active-site residues include His-178 and Asn-198. An N-linked (GlcNAc...) asparagine glycan is attached at Asn-215. Positions 238–346 (NPPKPAPSPP…FGNGGKKSSS (109 aa)) are cleaved as a propeptide — removed in mature form.

Belongs to the peptidase C1 family.

The polypeptide is Low-temperature-induced cysteine proteinase (Solanum lycopersicum (Tomato)).